The sequence spans 279 residues: Tumor necrosis factor ligand superfamily member 6 (279 aa).

Over 1–78 (MQQPMNYPCP…PLKKKDHNTN (78 aa)) the chain is Cytoplasmic. A disordered region spans residues 30–70 (FPCPSCGPRGPDQRRPPPPPPPVSPLPPPSQPLPLPPLTPL). Residues 45–68 (PPPPPPPVSPLPPPSQPLPLPPLT) show a composition bias toward pro residues. Residues 79–100 (LWLPVVFFMVLVALVGMGLGMY) traverse the membrane as a helical; Signal-anchor for type II membrane protein segment. At 101–279 (QLFHLQKELA…SKTFFGLYKL (179 aa)) the chain is on the extracellular side. Asn-117 carries N-linked (GlcNAc...) asparagine glycosylation. The span at 126–135 (EKQIANPSTP) shows a compositional bias: polar residues. The tract at residues 126–150 (EKQIANPSTPSEKKEPRSVAHLTGN) is disordered. Residues 143–279 (SVAHLTGNPH…SKTFFGLYKL (137 aa)) enclose the THD domain. Asn-182 is a glycosylation site (N-linked (GlcNAc...) asparagine). Cys-200 and Cys-231 form a disulfide bridge. N-linked (GlcNAc...) asparagine glycosylation is found at Asn-248 and Asn-258.

Belongs to the tumor necrosis factor family. As to quaternary structure, homotrimer. Interacts with ARHGAP9, BAIAP2L1, BTK, CACNB3, CACNB4, CRK, DLG2, DNMBP, DOCK4, EPS8L3, FGR, FYB1, FYN, HCK, ITK, ITSN2, KALRN, LYN, MACC1, MIA, MPP4, MYO15A, NCF1, NCK1, NCK2, NCKIPSD, OSTF1, PIK3R1, PSTPIP1, RIMBP3C, SAMSN1, SH3GL3, SH3PXD2B, SH3PXD2A, SH3RF2, SKAP2, SNX33, SNX9, SORBS3, SPTA1, SRC, SRGAP1, SRGAP2, SRGAP3, TEC, TJP3 and YES1. Post-translationally, the soluble form derives from the membrane form by proteolytic processing. The membrane-bound form undergoes two successive intramembrane proteolytic cleavages. The first one is processed by ADAM10 producing an N-terminal fragment, which lacks the receptor-binding extracellular domain. This ADAM10-processed FasL (FAsL APL) remnant form is still membrane anchored and further processed by SPPL2A that liberates the FasL intracellular domain (FasL ICD). FasL shedding by ADAM10 is a prerequisite for subsequent intramembrane cleavage by SPPL2A in T-cells. In terms of processing, phosphorylated by FGR on tyrosine residues; this is required for ubiquitination and subsequent internalization. N-glycosylated. Glycosylation enhances apoptotic activity. Post-translationally, monoubiquitinated. As to expression, expressed in T-cells. Expressed in natural killer cells.

Its subcellular location is the cell membrane. It localises to the cytoplasmic vesicle lumen. It is found in the lysosome lumen. The protein resides in the secreted. The protein localises to the nucleus. Its function is as follows. Cytokine that binds to TNFRSF6/FAS, a receptor that transduces the apoptotic signal into cells. Involved in cytotoxic T-cell-mediated apoptosis, natural killer cell-mediated apoptosis and in T-cell development. Initiates fratricidal/suicidal activation-induced cell death (AICD) in antigen-activated T-cells contributing to the termination of immune responses. TNFRSF6/FAS-mediated apoptosis also has a role in the induction of peripheral tolerance. Binds to TNFRSF6B/DcR3, a decoy receptor that blocks apoptosis. Induces FAS-mediated activation of NF-kappa-B, initiating non-apoptotic signaling pathways. Can induce apoptosis but does not appear to be essential for this process. In terms of biological role, cytoplasmic form induces gene transcription inhibition. The chain is Tumor necrosis factor ligand superfamily member 6 (Faslg) from Mus musculus (Mouse).